Reading from the N-terminus, the 131-residue chain is POU domain, class 3, transcription factor 3 (131 aa).

Residues 1–60 (FTQRRMKLGFTQADVGLALGTLYGNVFSQTTICRFEALQLSFKNMCKLKPLLNKWLEEAD) enclose the POU-specific domain. The homeobox DNA-binding region spans 78-131 (KRKKRTSIEVSVKGALESHFLKCPKPSAQEITNLADSLQLEKEVVRVWFCNNLQ).

The protein belongs to the POU transcription factor family. Class-3 subfamily. In terms of assembly, homodimer. As to expression, brain.

It localises to the nucleus. Functionally, transcription factor that acts synergistically with SOX11 and SOX4. Plays a role in neuronal development. Is implicated in an enhancer activity at the embryonic met-mesencephalic junction; the enhancer element contains the octamer motif (5'-ATTTGCAT-3'). In Sus scrofa (Pig), this protein is POU domain, class 3, transcription factor 3 (POU3F3).